A 325-amino-acid polypeptide reads, in one-letter code: Heme A synthase (325 aa).

The next 5 helical transmembrane spans lie at 6–26, 88–108, 116–136, 155–175, and 184–204; these read WLAV…FTRL, LVGR…FVVG, LRLC…WYMV, LFCA…PTVI, and LVGC…GLVA. Position 246 (H246) interacts with heme. 3 consecutive transmembrane segments (helical) span residues 248 to 268, 275 to 295, and 297 to 317; these read MSAF…FFYD, VFLV…TLLF, and IPID…GICV. Residue H305 participates in heme binding.

This sequence belongs to the COX15/CtaA family. Type 2 subfamily. As to quaternary structure, interacts with CtaB. Heme b serves as cofactor.

It is found in the cell membrane. It carries out the reaction Fe(II)-heme o + 2 A + H2O = Fe(II)-heme a + 2 AH2. It functions in the pathway porphyrin-containing compound metabolism; heme A biosynthesis; heme A from heme O: step 1/1. Functionally, catalyzes the conversion of heme O to heme A by two successive hydroxylations of the methyl group at C8. The first hydroxylation forms heme I, the second hydroxylation results in an unstable dihydroxymethyl group, which spontaneously dehydrates, resulting in the formyl group of heme A. In Neorickettsia sennetsu (strain ATCC VR-367 / Miyayama) (Ehrlichia sennetsu), this protein is Heme A synthase.